We begin with the raw amino-acid sequence, 268 residues long: Hemin import ATP-binding protein HmuV (268 aa).

One can recognise an ABC transporter domain in the interval 5-241 (LKAEAASFAL…ELIADVFDVA (237 aa)). An ATP-binding site is contributed by 37–44 (GPNGAGKS).

The protein belongs to the ABC transporter superfamily. Heme (hemin) importer (TC 3.A.1.14.5) family. As to quaternary structure, the complex is composed of two ATP-binding proteins (HmuV), two transmembrane proteins (HmuU) and a solute-binding protein (HmuT).

It localises to the cell inner membrane. Functionally, part of the ABC transporter complex HmuTUV involved in hemin import. Responsible for energy coupling to the transport system. The polypeptide is Hemin import ATP-binding protein HmuV (Rhodopseudomonas palustris (strain ATCC BAA-98 / CGA009)).